A 195-amino-acid polypeptide reads, in one-letter code: Dephospho-CoA kinase (195 aa).

A DPCK domain is found at 2-195 (IISLTGGIGV…DIVDSLNLNT (194 aa)). Residue 10 to 15 (GVGKSF) coordinates ATP.

The protein belongs to the CoaE family.

It localises to the cytoplasm. The enzyme catalyses 3'-dephospho-CoA + ATP = ADP + CoA + H(+). The protein operates within cofactor biosynthesis; coenzyme A biosynthesis; CoA from (R)-pantothenate: step 5/5. In terms of biological role, catalyzes the phosphorylation of the 3'-hydroxyl group of dephosphocoenzyme A to form coenzyme A. This is Dephospho-CoA kinase from Wolbachia pipientis wMel.